Reading from the N-terminus, the 206-residue chain is CASP-like protein 2C1 (206 aa).

Topologically, residues 1-31 (MSVLGVGPRTVTPHLRKGMMESSSGISLARA) are cytoplasmic. A helical transmembrane segment spans residues 32-52 (EAFLRLFAILVLVLTACLLGF). Over 53 to 71 (DTQTKLLFSTIKKTATFRD) the chain is Extracellular. Residues 72–92 (LGALQVVVYVDSVAAGYNLLQ) traverse the membrane as a helical segment. The Cytoplasmic portion of the chain corresponds to 93–111 (LGRGFISAKLKGKLINVSY). Residues 112 to 132 (VTLPWVCFLLDQAAVYTVFSA) traverse the membrane as a helical segment. The Extracellular segment spans residues 133-161 (NTAALQASIIAVTGESSLQWMKVCNRYTR). Residues 162–182 (FCIQVGGALLSGYLASLLMVL) traverse the membrane as a helical segment. Residues 183-206 (LSSLSAFSLFRLYSPKQFHLLKPT) are Cytoplasmic-facing.

This sequence belongs to the Casparian strip membrane proteins (CASP) family. Homodimer and heterodimers.

It is found in the cell membrane. The sequence is that of CASP-like protein 2C1 from Vitis vinifera (Grape).